We begin with the raw amino-acid sequence, 336 residues long: Glycerol-3-phosphate dehydrogenase [NAD(P)+] (336 aa).

NADPH is bound by residues Ser11, Trp12, and Lys106. Residues Lys106, Gly134, and Ser136 each coordinate sn-glycerol 3-phosphate. Residue Ala138 participates in NADPH binding. Sn-glycerol 3-phosphate-binding residues include Lys189, Asp242, Ser252, Arg253, and Asn254. Lys189 functions as the Proton acceptor in the catalytic mechanism. Arg253 contributes to the NADPH binding site. NADPH contacts are provided by Val277 and Glu279.

Belongs to the NAD-dependent glycerol-3-phosphate dehydrogenase family.

It localises to the cytoplasm. The catalysed reaction is sn-glycerol 3-phosphate + NAD(+) = dihydroxyacetone phosphate + NADH + H(+). It catalyses the reaction sn-glycerol 3-phosphate + NADP(+) = dihydroxyacetone phosphate + NADPH + H(+). The protein operates within membrane lipid metabolism; glycerophospholipid metabolism. Its function is as follows. Catalyzes the reduction of the glycolytic intermediate dihydroxyacetone phosphate (DHAP) to sn-glycerol 3-phosphate (G3P), the key precursor for phospholipid synthesis. The chain is Glycerol-3-phosphate dehydrogenase [NAD(P)+] from Agathobacter rectalis (strain ATCC 33656 / DSM 3377 / JCM 17463 / KCTC 5835 / VPI 0990) (Eubacterium rectale).